Consider the following 343-residue polypeptide: Tetraacyldisaccharide 4'-kinase (343 aa).

An ATP-binding site is contributed by 58-65; that stretch reads VAGGAGKT.

The protein belongs to the LpxK family.

It carries out the reaction a lipid A disaccharide + ATP = a lipid IVA + ADP + H(+). Its pathway is glycolipid biosynthesis; lipid IV(A) biosynthesis; lipid IV(A) from (3R)-3-hydroxytetradecanoyl-[acyl-carrier-protein] and UDP-N-acetyl-alpha-D-glucosamine: step 6/6. Functionally, transfers the gamma-phosphate of ATP to the 4'-position of a tetraacyldisaccharide 1-phosphate intermediate (termed DS-1-P) to form tetraacyldisaccharide 1,4'-bis-phosphate (lipid IVA). The chain is Tetraacyldisaccharide 4'-kinase from Polaromonas naphthalenivorans (strain CJ2).